The chain runs to 427 residues: Protein adenylyltransferase Fic (427 aa).

Residues 17–37 form a helical membrane-spanning segment; it reads LLLASLAGLSIAIIVTHAPVF. 2 TPR repeats span residues 77 to 110 and 111 to 143; these read ALAA…APHH and PEIL…NPLD. The short motif at 200-205 is the Inhibitory (S/T)XXXE(G/N) motif element; the sequence is SNAIEG. ATP contacts are provided by residues Glu204 and 286–289; that span reads VSDH. The Fido domain occupies 255–390; the sequence is ITIDDIIEIH…IRPFIRFVAR (136 aa). His333 is an active-site residue. ATP-binding positions include 337 to 344, 369 to 370, and Asn377; these read DGNGRTAR and YY.

This sequence belongs to the fic family. As to quaternary structure, homodimer.

The protein localises to the membrane. It carries out the reaction L-tyrosyl-[protein] + ATP = O-(5'-adenylyl)-L-tyrosyl-[protein] + diphosphate. The catalysed reaction is L-threonyl-[protein] + ATP = 3-O-(5'-adenylyl)-L-threonyl-[protein] + diphosphate. The enzyme catalyses 3-O-(5'-adenylyl)-L-threonyl-[protein] + H2O = L-threonyl-[protein] + AMP + H(+). The side chain of Glu-204 determines which of the two opposing activities (AMPylase or de-AMPylase) will take place. In response to endoplasmic reticulum stress, mediates de-AMPylase activity. Adenylyltransferase activity is inhibited by the inhibitory helix present at the N-terminus: Glu-204 binds ATP and competes with ATP-binding at Arg-344, thereby preventing adenylyltransferase activity. In unstressed cells, disengagement of Glu-204 promotes adenylyltransferase activity. Activation dissociates ATP-binding from Glu-204, allowing ordered binding of the entire ATP moiety with the alpha-phosphate in an orientation that is productive for accepting an incoming target hydroxyl side chain. Its function is as follows. Protein that can both mediate the addition of adenosine 5'-monophosphate (AMP) to specific residues of target proteins (AMPylation), and the removal of the same modification from target proteins (de-AMPylation), depending on the context. The side chain of Glu-204 determines which of the two opposing activities (AMPylase or de-AMPylase) will take place. Acts as a key regulator of the unfolded protein response (UPR) by mediating AMPylation or de-AMPylation of Hsc70-3/BiP. In unstressed cells, acts as an adenylyltransferase by mediating AMPylation of Hsc70-3/BiP, thereby inactivating it. In response to endoplasmic reticulum stress, acts as a phosphodiesterase by mediating removal of ATP (de-AMPylation) from Hsc70-3/BiP, leading to restore HSPA5/BiP activity. This is Protein adenylyltransferase Fic from Nematostella vectensis (Starlet sea anemone).